Here is a 354-residue protein sequence, read N- to C-terminus: 4-hydroxy-3-methylbut-2-en-1-yl diphosphate synthase (flavodoxin) (354 aa).

Positions 262, 265, 297, and 304 each coordinate [4Fe-4S] cluster.

Belongs to the IspG family. It depends on [4Fe-4S] cluster as a cofactor.

The catalysed reaction is (2E)-4-hydroxy-3-methylbut-2-enyl diphosphate + oxidized [flavodoxin] + H2O + 2 H(+) = 2-C-methyl-D-erythritol 2,4-cyclic diphosphate + reduced [flavodoxin]. The protein operates within isoprenoid biosynthesis; isopentenyl diphosphate biosynthesis via DXP pathway; isopentenyl diphosphate from 1-deoxy-D-xylulose 5-phosphate: step 5/6. Converts 2C-methyl-D-erythritol 2,4-cyclodiphosphate (ME-2,4cPP) into 1-hydroxy-2-methyl-2-(E)-butenyl 4-diphosphate. In Helicobacter hepaticus (strain ATCC 51449 / 3B1), this protein is 4-hydroxy-3-methylbut-2-en-1-yl diphosphate synthase (flavodoxin).